The sequence spans 257 residues: Thiazole synthase (257 aa).

The active-site Schiff-base intermediate with DXP is the Lys100. 1-deoxy-D-xylulose 5-phosphate-binding positions include Gly161, 187–188 (AG), and 209–210 (NT).

The protein belongs to the ThiG family. As to quaternary structure, homotetramer. Forms heterodimers with either ThiH or ThiS.

Its subcellular location is the cytoplasm. It catalyses the reaction [ThiS sulfur-carrier protein]-C-terminal-Gly-aminoethanethioate + 2-iminoacetate + 1-deoxy-D-xylulose 5-phosphate = [ThiS sulfur-carrier protein]-C-terminal Gly-Gly + 2-[(2R,5Z)-2-carboxy-4-methylthiazol-5(2H)-ylidene]ethyl phosphate + 2 H2O + H(+). It participates in cofactor biosynthesis; thiamine diphosphate biosynthesis. In terms of biological role, catalyzes the rearrangement of 1-deoxy-D-xylulose 5-phosphate (DXP) to produce the thiazole phosphate moiety of thiamine. Sulfur is provided by the thiocarboxylate moiety of the carrier protein ThiS. In vitro, sulfur can be provided by H(2)S. The chain is Thiazole synthase from Pelagibacter ubique (strain HTCC1062).